A 388-amino-acid polypeptide reads, in one-letter code: Pepsin F (388 aa).

The signal sequence occupies residues 1–15 (MKWLGLLGLVALSEC). Positions 16–58 (LVTIPLMKVKSMRENLRENDILLDYLEKHPYRPTYKLLSGQQD) are cleaved as a propeptide — activation peptide. One can recognise a Peptidase A1 domain in the interval 74 to 385 (YIGIISIGTP…DRANNRIGLA (312 aa)). D92 is a catalytic residue. 2 cysteine pairs are disulfide-bonded: C105/C110 and C266/C270. D275 is a catalytic residue. A disulfide bridge links C309 with C343.

The protein belongs to the peptidase A1 family.

It localises to the secreted. It carries out the reaction Preferential cleavage: hydrophobic, preferably aromatic, residues in P1 and P1' positions. Cleaves 1-Phe-|-Val-2, 4-Gln-|-His-5, 13-Glu-|-Ala-14, 14-Ala-|-Leu-15, 15-Leu-|-Tyr-16, 16-Tyr-|-Leu-17, 23-Gly-|-Phe-24, 24-Phe-|-Phe-25 and 25-Phe-|-Tyr-26 bonds in the B chain of insulin.. Its function is as follows. Shows particularly broad specificity; although bonds involving phenylalanine and leucine are preferred, many others are also cleaved to some extent. This is Pepsin F from Oryctolagus cuniculus (Rabbit).